The primary structure comprises 218 residues: GTP cyclohydrolase 1 (218 aa).

Positions 111, 114, and 182 each coordinate Zn(2+).

The protein belongs to the GTP cyclohydrolase I family. Toroid-shaped homodecamer, composed of two pentamers of five dimers.

It carries out the reaction GTP + H2O = 7,8-dihydroneopterin 3'-triphosphate + formate + H(+). Its pathway is cofactor biosynthesis; 7,8-dihydroneopterin triphosphate biosynthesis; 7,8-dihydroneopterin triphosphate from GTP: step 1/1. The polypeptide is GTP cyclohydrolase 1 (Buchnera aphidicola subsp. Schizaphis graminum (strain Sg)).